We begin with the raw amino-acid sequence, 377 residues long: Terpene synthase 1 (377 aa).

Residues aspartate 81–alanine 86 carry the DDxx(x)D/E motif motif. The short motif at asparagine 221–glutamate 229 is the NDxxSxxxD/E motif element. The tract at residues arginine 326–glutamine 359 is disordered. Low complexity predominate over residues threonine 335–asparagine 356.

Belongs to the terpene synthase family.

The catalysed reaction is (2E,6E)-farnesyl diphosphate = (2S,3R,6S,9S)-(-)-protoillud-7-ene + diphosphate. Functionally, terpene synthase that converts its substrate farnesyl diphosphate (FPP) into the sesquiterpene protoillud-7-ene. This chain is Terpene synthase 1, found in Dictyostelium purpureum (Slime mold).